The following is a 70-amino-acid chain: MSDIADRVKKIVVEHLGVEEEKVTETTSFIDDLGADSLDTVELVMAFEEEFGIEIPDDAAETIQTFGDAP.

Residues 2–70 (SDIADRVKKI…ETIQTFGDAP (69 aa)) form the Carrier domain. Ser37 carries the post-translational modification O-(pantetheine 4'-phosphoryl)serine.

Belongs to the acyl carrier protein (ACP) family. In terms of processing, 4'-phosphopantetheine is transferred from CoA to a specific serine of apo-ACP by AcpS. This modification is essential for activity because fatty acids are bound in thioester linkage to the sulfhydryl of the prosthetic group.

It localises to the cytoplasm. Its pathway is lipid metabolism; fatty acid biosynthesis. Functionally, carrier of the growing fatty acid chain in fatty acid biosynthesis. This Cereibacter sphaeroides (Rhodobacter sphaeroides) protein is Acyl carrier protein.